Here is a 618-residue protein sequence, read N- to C-terminus: Glucose starvation modulator protein 1 (618 aa).

The segment at residues 20–48 (CEFCHTKHIQCDVGRPCQNCLKRNIGKFC) is a DNA-binding region (zn(2)-C6 fungal-type). The disordered stretch occupies residues 325-352 (ANANTHPSHNAKLESECDSSSHSDADLE). The span at 335-352 (AKLESECDSSSHSDADLE) shows a compositional bias: basic and acidic residues. One can recognise a PAS domain in the interval 466 to 538 (LLDLENMAKL…QIFNELLAFG (73 aa)).

It belongs to the ERT1/acuK family.

The protein localises to the nucleus. Its function is as follows. Transcription factor which regulates nonfermentable carbon utilization. Binds specifically to 5'-CGGN(8)CGG-3' and 5'-CGGN(9)CGG-3' sequences in the promoter region. The chain is Glucose starvation modulator protein 1 (GSM1) from Saccharomyces cerevisiae (strain RM11-1a) (Baker's yeast).